The chain runs to 322 residues: Homoserine kinase (322 aa).

An ATP-binding site is contributed by 107-117; the sequence is PLSSGMGGSAA.

This sequence belongs to the GHMP kinase family. Homoserine kinase subfamily.

It localises to the cytoplasm. It catalyses the reaction L-homoserine + ATP = O-phospho-L-homoserine + ADP + H(+). It participates in amino-acid biosynthesis; L-threonine biosynthesis; L-threonine from L-aspartate: step 4/5. Functionally, catalyzes the ATP-dependent phosphorylation of L-homoserine to L-homoserine phosphate. In Xylella fastidiosa (strain 9a5c), this protein is Homoserine kinase.